The following is a 180-amino-acid chain: Translation initiation factor IF-3 (180 aa).

This sequence belongs to the IF-3 family. As to quaternary structure, monomer.

Its subcellular location is the cytoplasm. IF-3 binds to the 30S ribosomal subunit and shifts the equilibrium between 70S ribosomes and their 50S and 30S subunits in favor of the free subunits, thus enhancing the availability of 30S subunits on which protein synthesis initiation begins. The sequence is that of Translation initiation factor IF-3 from Mesoplasma florum (strain ATCC 33453 / NBRC 100688 / NCTC 11704 / L1) (Acholeplasma florum).